The chain runs to 239 residues: Gamma-lactamase MBL2 (239 aa).

Residues histidine 56, histidine 58, aspartate 60, histidine 61, histidine 141, and aspartate 165 each coordinate Zn(2+).

The protein belongs to the metallo-beta-lactamase superfamily.

Its function is as follows. Gamma-lactamase; part of the Fusarium detoxification of benzoxazolinone cluster 2 (FDB2) involved in the degradation of benzoxazolinones produced by the host plant. Maize, wheat, and rye produce the 2 benzoxazinone phytoanticipins 2,4-dihy-droxy-7-methoxy-1,4-benzoxazin-3-one (DIMBOA) and 2,4-dihydroxy-1,4-benzoxazin-3-one (DIBOA) that, due to their inherent instability once released, spontaneously degrade to the more stable corresponding benzoxazolinones, 6-methoxy-2-benzoxazolinone (MBOA) and 2-benzoxazolinone (BOA), respectively. The first step in the detoxification of benzoxazolinones involves the hydrolysis of the cyclic ester bond of benzoxazolinones by the FDB1 cluster gamma-lactamase MBL1 to aminophenols. MBL1 is able to convert BOA into 2-aminophenol (2-AP), as well as MBOA into 5-methoxy-2-aminophenol (2-AMP). The FDB2 cluster N-malonyltransferase FDB2/NAT1 then metabolizes aminophenols via N-malonylation to non-toxic malonamic acids. FDB2/NAT1 converts 2-AP into N-(2-hydroxyphenyl) malonamic acid (HPMA) and 2-AMP into N-(2-hydroxy-4-methoxyphenyl) malonamic acid (HMPMA). The duplicated dienlactone hydrolases DLH1 and DLH2 may provide redundant function for hydrolyzing the lactone moiety in the BOA molecule. The roles of the amidases and other enzymes encoded by the 2 FDB clusters have not been identified so far. In Gibberella moniliformis (strain M3125 / FGSC 7600) (Maize ear and stalk rot fungus), this protein is Gamma-lactamase MBL2.